Consider the following 375-residue polypeptide: Platelet-derived growth factor receptor-like protein (375 aa).

An N-terminal signal peptide occupies residues 1–21 (MKVWLLLGLLLVHEALEDVTG). The interval 22 to 64 (QHLPKNKRPKEPGENRIKPTNKKVKPKIPKIKDRDSADSTPKT) is disordered. Residues 40-50 (PTNKKVKPKIP) show a composition bias toward basic residues. An Ig-like C2-type 1 domain is found at 62–159 (PKTQSIMMQV…GYICRKDETK (98 aa)). C96 and C143 are disulfide-bonded. Residues N132 and N219 are each glycosylated (N-linked (GlcNAc...) asparagine). The Ig-like C2-type 2 domain occupies 272–375 (PSTTILASSN…TTVATTVEFS (104 aa)). Residues C293 and C357 are joined by a disulfide bond.

In terms of assembly, forms a complex composed of PDGFRL, TNK2 and GRB2.

The protein resides in the secreted. This chain is Platelet-derived growth factor receptor-like protein (PDGFRL), found in Macaca fascicularis (Crab-eating macaque).